Consider the following 178-residue polypeptide: MVEFYFHDNKDTLENFTEDHNSGEPVSFDQLAEIGVIYKYITTQEELDALATEREYKNRDVVTLNLPAFNNDIDAYNAKMQQFYKEHYHEDEEIRYIAEGEGYFDVRDKQDRWIRAKLSPYDLLILPAGIYHRFTLTNAAKHVKAVRLFKDEPKWEAINRDTGKNTEARELYAKTIAV.

Positions 87, 89, 93, and 132 each coordinate Fe(2+). The Ni(2+) site is built by His87, His89, Glu93, and His132.

It belongs to the acireductone dioxygenase (ARD) family. The cofactor is Fe(2+). Ni(2+) is required as a cofactor.

Its subcellular location is the cytoplasm. The protein resides in the nucleus. It carries out the reaction 1,2-dihydroxy-5-(methylsulfanyl)pent-1-en-3-one + O2 = 4-methylsulfanyl-2-oxobutanoate + formate + 2 H(+). It catalyses the reaction 1,2-dihydroxy-5-(methylsulfanyl)pent-1-en-3-one + O2 = 3-(methylsulfanyl)propanoate + CO + formate + 2 H(+). Its pathway is amino-acid biosynthesis; L-methionine biosynthesis via salvage pathway; L-methionine from S-methyl-5-thio-alpha-D-ribose 1-phosphate: step 5/6. Catalyzes 2 different reactions between oxygen and the acireductone 1,2-dihydroxy-3-keto-5-methylthiopentene (DHK-MTPene) depending upon the metal bound in the active site. Fe-containing acireductone dioxygenase (Fe-ARD) produces formate and 2-keto-4-methylthiobutyrate (KMTB), the alpha-ketoacid precursor of methionine in the methionine recycle pathway. Ni-containing acireductone dioxygenase (Ni-ARD) produces methylthiopropionate, carbon monoxide and formate, and does not lie on the methionine recycle pathway. The protein is Acireductone dioxygenase of Candida albicans (strain SC5314 / ATCC MYA-2876) (Yeast).